Consider the following 314-residue polypeptide: Acetyl-coenzyme A carboxylase carboxyl transferase subunit beta (314 aa).

Residues 44-311 form the CoA carboxyltransferase N-terminal domain; sequence LMNKCPHCGT…VETWQASSPL (268 aa). Positions 48, 51, 67, and 70 each coordinate Zn(2+). The C4-type zinc finger occupies 48 to 70; sequence CPHCGTIHYSKDLEKNLRVCKGC.

This sequence belongs to the AccD/PCCB family. As to quaternary structure, acetyl-CoA carboxylase is a heterohexamer composed of biotin carboxyl carrier protein (AccB), biotin carboxylase (AccC) and two subunits each of ACCase subunit alpha (AccA) and ACCase subunit beta (AccD). The cofactor is Zn(2+).

The protein resides in the cytoplasm. It catalyses the reaction N(6)-carboxybiotinyl-L-lysyl-[protein] + acetyl-CoA = N(6)-biotinyl-L-lysyl-[protein] + malonyl-CoA. It functions in the pathway lipid metabolism; malonyl-CoA biosynthesis; malonyl-CoA from acetyl-CoA: step 1/1. Functionally, component of the acetyl coenzyme A carboxylase (ACC) complex. Biotin carboxylase (BC) catalyzes the carboxylation of biotin on its carrier protein (BCCP) and then the CO(2) group is transferred by the transcarboxylase to acetyl-CoA to form malonyl-CoA. The polypeptide is Acetyl-coenzyme A carboxylase carboxyl transferase subunit beta (Brevibacillus brevis (strain 47 / JCM 6285 / NBRC 100599)).